Consider the following 188-residue polypeptide: ATP synthase subunit delta (188 aa).

It belongs to the ATPase delta chain family. As to quaternary structure, F-type ATPases have 2 components, F(1) - the catalytic core - and F(0) - the membrane proton channel. F(1) has five subunits: alpha(3), beta(3), gamma(1), delta(1), epsilon(1). F(0) has three main subunits: a(1), b(2) and c(10-14). The alpha and beta chains form an alternating ring which encloses part of the gamma chain. F(1) is attached to F(0) by a central stalk formed by the gamma and epsilon chains, while a peripheral stalk is formed by the delta and b chains.

The protein resides in the cell inner membrane. F(1)F(0) ATP synthase produces ATP from ADP in the presence of a proton or sodium gradient. F-type ATPases consist of two structural domains, F(1) containing the extramembraneous catalytic core and F(0) containing the membrane proton channel, linked together by a central stalk and a peripheral stalk. During catalysis, ATP synthesis in the catalytic domain of F(1) is coupled via a rotary mechanism of the central stalk subunits to proton translocation. In terms of biological role, this protein is part of the stalk that links CF(0) to CF(1). It either transmits conformational changes from CF(0) to CF(1) or is implicated in proton conduction. The protein is ATP synthase subunit delta of Rhizobium johnstonii (strain DSM 114642 / LMG 32736 / 3841) (Rhizobium leguminosarum bv. viciae).